The primary structure comprises 221 residues: Ribonuclease 3 (221 aa).

The 123-residue stretch at 1–123 (MERTGHAFAD…LIAVLYLDGG (123 aa)) folds into the RNase III domain. Glutamate 36 contacts Mg(2+). Aspartate 40 is a catalytic residue. Mg(2+) contacts are provided by aspartate 109 and glutamate 112. Glutamate 112 is an active-site residue. In terms of domain architecture, DRBM spans 148-217 (DAKTELQEWA…AAALLLREGV (70 aa)).

The protein belongs to the ribonuclease III family. As to quaternary structure, homodimer. It depends on Mg(2+) as a cofactor.

It localises to the cytoplasm. It carries out the reaction Endonucleolytic cleavage to 5'-phosphomonoester.. Digests double-stranded RNA. Involved in the processing of primary rRNA transcript to yield the immediate precursors to the large and small rRNAs (23S and 16S). Processes some mRNAs, and tRNAs when they are encoded in the rRNA operon. Processes pre-crRNA and tracrRNA of type II CRISPR loci if present in the organism. The protein is Ribonuclease 3 of Mesorhizobium japonicum (strain LMG 29417 / CECT 9101 / MAFF 303099) (Mesorhizobium loti (strain MAFF 303099)).